The following is an 84-amino-acid chain: ATP synthase subunit c (84 aa).

The next 2 helical transmembrane spans lie at 21–38 (ALGA…IGKI) and 60–80 (MIII…VCLL).

Belongs to the ATPase C chain family. F-type ATPases have 2 components, F(1) - the catalytic core - and F(0) - the membrane proton channel. F(1) has five subunits: alpha(3), beta(3), gamma(1), delta(1), epsilon(1). F(0) has three main subunits: a(1), b(2) and c(10-14). The alpha and beta chains form an alternating ring which encloses part of the gamma chain. F(1) is attached to F(0) by a central stalk formed by the gamma and epsilon chains, while a peripheral stalk is formed by the delta and b chains.

The protein localises to the cell inner membrane. Functionally, f(1)F(0) ATP synthase produces ATP from ADP in the presence of a proton or sodium gradient. F-type ATPases consist of two structural domains, F(1) containing the extramembraneous catalytic core and F(0) containing the membrane proton channel, linked together by a central stalk and a peripheral stalk. During catalysis, ATP synthesis in the catalytic domain of F(1) is coupled via a rotary mechanism of the central stalk subunits to proton translocation. Key component of the F(0) channel; it plays a direct role in translocation across the membrane. A homomeric c-ring of between 10-14 subunits forms the central stalk rotor element with the F(1) delta and epsilon subunits. This is ATP synthase subunit c from Phocaeicola vulgatus (strain ATCC 8482 / DSM 1447 / JCM 5826 / CCUG 4940 / NBRC 14291 / NCTC 11154) (Bacteroides vulgatus).